We begin with the raw amino-acid sequence, 159 residues long: MQKRAIYPGTFDPITNGHLDIVTRATQMFDHVILAIAASPGKKPMFTLDERVALAQKATAHLGNVEVVGFSDLMANFARDRQANILIRGLRAVADFEYEMQLAHMNRHLIPQLESVFLIPSKEWSFISSSLVKEVARHQGDVTHFLPDNVHQALMDKLK.

Thr10 is a binding site for substrate. ATP contacts are provided by residues 10–11 (TF) and His18. Residues Lys42, Met74, and Arg88 each coordinate substrate. ATP is bound by residues 89 to 91 (GLR), Glu99, and 124 to 130 (WSFISSS).

This sequence belongs to the bacterial CoaD family. Homohexamer. It depends on Mg(2+) as a cofactor.

Its subcellular location is the cytoplasm. The catalysed reaction is (R)-4'-phosphopantetheine + ATP + H(+) = 3'-dephospho-CoA + diphosphate. It functions in the pathway cofactor biosynthesis; coenzyme A biosynthesis; CoA from (R)-pantothenate: step 4/5. In terms of biological role, reversibly transfers an adenylyl group from ATP to 4'-phosphopantetheine, yielding dephospho-CoA (dPCoA) and pyrophosphate. This Salmonella choleraesuis (strain SC-B67) protein is Phosphopantetheine adenylyltransferase.